The following is a 224-amino-acid chain: PKHD-type hydroxylase CYB_2270 (224 aa).

The 99-residue stretch at 78–176 (LIHSILISCY…RYAAVSWVQS (99 aa)) folds into the Fe2OG dioxygenase domain. Residues H96, D98, and H157 each coordinate Fe cation. Residue R167 coordinates 2-oxoglutarate.

The cofactor is Fe(2+). Requires L-ascorbate as cofactor.

This chain is PKHD-type hydroxylase CYB_2270, found in Synechococcus sp. (strain JA-2-3B'a(2-13)) (Cyanobacteria bacterium Yellowstone B-Prime).